A 99-amino-acid chain; its full sequence is UPF0125 protein PM0166 (99 aa).

It belongs to the UPF0125 (RnfH) family.

In Pasteurella multocida (strain Pm70), this protein is UPF0125 protein PM0166.